Reading from the N-terminus, the 282-residue chain is 3-methyl-2-oxobutanoate hydroxymethyltransferase (282 aa).

The Mg(2+) site is built by aspartate 45 and aspartate 84. 3-methyl-2-oxobutanoate contacts are provided by residues 45–46, aspartate 84, and lysine 114; that span reads DS. Glutamate 116 is a Mg(2+) binding site. Glutamate 183 serves as the catalytic Proton acceptor.

Belongs to the PanB family. As to quaternary structure, homodecamer; pentamer of dimers. Requires Mg(2+) as cofactor.

The protein localises to the cytoplasm. The enzyme catalyses 3-methyl-2-oxobutanoate + (6R)-5,10-methylene-5,6,7,8-tetrahydrofolate + H2O = 2-dehydropantoate + (6S)-5,6,7,8-tetrahydrofolate. Its pathway is cofactor biosynthesis; (R)-pantothenate biosynthesis; (R)-pantoate from 3-methyl-2-oxobutanoate: step 1/2. In terms of biological role, catalyzes the reversible reaction in which hydroxymethyl group from 5,10-methylenetetrahydrofolate is transferred onto alpha-ketoisovalerate to form ketopantoate. This Syntrophobacter fumaroxidans (strain DSM 10017 / MPOB) protein is 3-methyl-2-oxobutanoate hydroxymethyltransferase.